The primary structure comprises 130 residues: Sec-independent protein translocase protein TatB (130 aa).

A helical membrane pass occupies residues 1–21 (MFDISFTELIVIGIVALVVIG). The segment at 70–130 (VDSFQNSVHS…TPKEPRQSGS (61 aa)) is disordered. 2 stretches are compositionally biased toward basic and acidic residues: residues 80–89 (EINKIQETAD) and 96–111 (PEKESHAVESGGKTEP).

This sequence belongs to the TatB family. The Tat system comprises two distinct complexes: a TatABC complex, containing multiple copies of TatA, TatB and TatC subunits, and a separate TatA complex, containing only TatA subunits. Substrates initially bind to the TatABC complex, which probably triggers association of the separate TatA complex to form the active translocon.

The protein localises to the cell inner membrane. Its function is as follows. Part of the twin-arginine translocation (Tat) system that transports large folded proteins containing a characteristic twin-arginine motif in their signal peptide across membranes. Together with TatC, TatB is part of a receptor directly interacting with Tat signal peptides. TatB may form an oligomeric binding site that transiently accommodates folded Tat precursor proteins before their translocation. The polypeptide is Sec-independent protein translocase protein TatB (Nitrosomonas eutropha (strain DSM 101675 / C91 / Nm57)).